The chain runs to 92 residues: Probable Fe(2+)-trafficking protein (92 aa).

The protein belongs to the Fe(2+)-trafficking protein family.

Its function is as follows. Could be a mediator in iron transactions between iron acquisition and iron-requiring processes, such as synthesis and/or repair of Fe-S clusters in biosynthetic enzymes. The sequence is that of Probable Fe(2+)-trafficking protein from Shewanella sp. (strain W3-18-1).